Consider the following 267-residue polypeptide: Ribosomal RNA small subunit methyltransferase A (267 aa).

Residues asparagine 18, leucine 20, glycine 45, glutamate 66, aspartate 91, and asparagine 112 each contribute to the S-adenosyl-L-methionine site.

The protein belongs to the class I-like SAM-binding methyltransferase superfamily. rRNA adenine N(6)-methyltransferase family. RsmA subfamily.

It is found in the cytoplasm. The catalysed reaction is adenosine(1518)/adenosine(1519) in 16S rRNA + 4 S-adenosyl-L-methionine = N(6)-dimethyladenosine(1518)/N(6)-dimethyladenosine(1519) in 16S rRNA + 4 S-adenosyl-L-homocysteine + 4 H(+). Its function is as follows. Specifically dimethylates two adjacent adenosines (A1518 and A1519) in the loop of a conserved hairpin near the 3'-end of 16S rRNA in the 30S particle. May play a critical role in biogenesis of 30S subunits. In Shewanella woodyi (strain ATCC 51908 / MS32), this protein is Ribosomal RNA small subunit methyltransferase A.